Consider the following 326-residue polypeptide: Undecaprenyl-diphosphatase (326 aa).

The next 9 helical transmembrane spans lie at 11-31 (AFSL…IAVA), 42-62 (TGVI…LGFI), 90-110 (GVAF…WYFW), 138-158 (LGIG…KLLV), 165-185 (FFRS…LLAL), 212-232 (ALAL…GLFI), 242-262 (FSFL…LKGL), 272-292 (ILPL…AIAW), and 304-324 (IFVW…GMGF).

It belongs to the UppP family.

It is found in the cell inner membrane. The catalysed reaction is di-trans,octa-cis-undecaprenyl diphosphate + H2O = di-trans,octa-cis-undecaprenyl phosphate + phosphate + H(+). In terms of biological role, catalyzes the dephosphorylation of undecaprenyl diphosphate (UPP). Confers resistance to bacitracin. The polypeptide is Undecaprenyl-diphosphatase (Synechocystis sp. (strain ATCC 27184 / PCC 6803 / Kazusa)).